Consider the following 98-residue polypeptide: Large ribosomal subunit protein uL23 (98 aa).

Belongs to the universal ribosomal protein uL23 family. As to quaternary structure, part of the 50S ribosomal subunit. Contacts protein L29, and trigger factor when it is bound to the ribosome.

In terms of biological role, one of the early assembly proteins it binds 23S rRNA. One of the proteins that surrounds the polypeptide exit tunnel on the outside of the ribosome. Forms the main docking site for trigger factor binding to the ribosome. This is Large ribosomal subunit protein uL23 from Rickettsia rickettsii (strain Iowa).